Here is a 255-residue protein sequence, read N- to C-terminus: Type III pantothenate kinase (255 aa).

6-13 (DVGNTNTV) provides a ligand contact to ATP. Residues Tyr-100 and 107 to 110 (GADR) contribute to the substrate site. The active-site Proton acceptor is the Asp-109. Asp-129 contributes to the K(+) binding site. Residue Thr-132 coordinates ATP. Thr-184 serves as a coordination point for substrate.

It belongs to the type III pantothenate kinase family. In terms of assembly, homodimer. It depends on NH4(+) as a cofactor. K(+) is required as a cofactor.

The protein resides in the cytoplasm. The catalysed reaction is (R)-pantothenate + ATP = (R)-4'-phosphopantothenate + ADP + H(+). Its pathway is cofactor biosynthesis; coenzyme A biosynthesis; CoA from (R)-pantothenate: step 1/5. Catalyzes the phosphorylation of pantothenate (Pan), the first step in CoA biosynthesis. This chain is Type III pantothenate kinase, found in Acetivibrio thermocellus (strain ATCC 27405 / DSM 1237 / JCM 9322 / NBRC 103400 / NCIMB 10682 / NRRL B-4536 / VPI 7372) (Clostridium thermocellum).